A 380-amino-acid chain; its full sequence is Cytochrome b (380 aa).

Helical transmembrane passes span 34 to 54, 78 to 99, 114 to 134, and 179 to 199; these read FGSL…LLAM, WLIR…YLHI, WNTG…GYVL, and FFAL…IHLT. Heme b is bound by residues H84 and H98. Residues H183 and H197 each contribute to the heme b site. H202 contacts a ubiquinone. A run of 4 helical transmembrane segments spans residues 227–247, 289–309, 321–341, and 348–368; these read LKDI…ALFS, LGGV…PFLH, ISQL…WVGS, and FIII…VLFP.

The protein belongs to the cytochrome b family. The cytochrome bc1 complex contains 11 subunits: 3 respiratory subunits (MT-CYB, CYC1 and UQCRFS1), 2 core proteins (UQCRC1 and UQCRC2) and 6 low-molecular weight proteins (UQCRH/QCR6, UQCRB/QCR7, UQCRQ/QCR8, UQCR10/QCR9, UQCR11/QCR10 and a cleavage product of UQCRFS1). This cytochrome bc1 complex then forms a dimer. It depends on heme b as a cofactor.

It is found in the mitochondrion inner membrane. Component of the ubiquinol-cytochrome c reductase complex (complex III or cytochrome b-c1 complex) that is part of the mitochondrial respiratory chain. The b-c1 complex mediates electron transfer from ubiquinol to cytochrome c. Contributes to the generation of a proton gradient across the mitochondrial membrane that is then used for ATP synthesis. This Pelecanoides georgicus (South Georgia diving petrel) protein is Cytochrome b (MT-CYB).